A 637-amino-acid chain; its full sequence is MLNITLPDGSVRQYESPVTVAQIAASIGAGLAKAAVAGRVNGKLVDACDPIVEDSAVQIITPKDQEGIEIIRHSCAHLVGHAVKQLYPNAKMVIGPVIEEGFYYDIATEKPFTPEDVAAIEARMKELIAQDYDVVKIMTPRAEAIKIFQERGEEYKLRLIDDMPEVEAMGMYHHQEYVDMCRGPHVPNTRFLKNFKLTKLAGAYWRGDSNNEMLQRIYGTAWATKDELKAYIQRIEEAEKRDHRKLGKQLDLFHLQDEAPGMVFWHPKGWALWQVIEQHMRKELNAAGYKEVKTPQIMDKTFWEKSGHWENYKDNMFVTSSEKREYAVKPMNCPGHVQIFNNGLRSYRDLPMRLAEFGSCHRNEPSGALHGLMRVRGFVQDDAHIFCTEDQIVSEARAFNELLVRIYKQFGFHDVSVKLSLRPEQRAGSDDVWDKAEQGLREALTACGVEWGELPGEGAFYGPKIEYHVRDALGRSWQCGTLQLDFVLPERLDAEYVTENNDRARPVMLHRAILGSLERFIGILIENHAGSFPLWLAPVQLVIMNITENQADYCREVAAKLQAAGFRVELDLRNEKIGYKIRDNSQYRFPYQIVVGDKEKQENKVAVRRKAEDLGSLDLDDFIAQLQQEITDALVNH.

A TGS domain is found at 1–61 (MLNITLPDGS…VEDSAVQIIT (61 aa)). The interval 242-533 (DHRKLGKQLD…LIENHAGSFP (292 aa)) is catalytic. Residues cysteine 333, histidine 384, and histidine 510 each contribute to the Zn(2+) site.

The protein belongs to the class-II aminoacyl-tRNA synthetase family. In terms of assembly, homodimer. It depends on Zn(2+) as a cofactor.

It is found in the cytoplasm. It carries out the reaction tRNA(Thr) + L-threonine + ATP = L-threonyl-tRNA(Thr) + AMP + diphosphate + H(+). Catalyzes the attachment of threonine to tRNA(Thr) in a two-step reaction: L-threonine is first activated by ATP to form Thr-AMP and then transferred to the acceptor end of tRNA(Thr). Also edits incorrectly charged L-seryl-tRNA(Thr). The chain is Threonine--tRNA ligase from Neisseria meningitidis serogroup A / serotype 4A (strain DSM 15465 / Z2491).